Here is a 226-residue protein sequence, read N- to C-terminus: DNA mismatch repair protein MutH (226 aa).

This sequence belongs to the MutH family.

Its subcellular location is the cytoplasm. In terms of biological role, sequence-specific endonuclease that cleaves unmethylated GATC sequences. It is involved in DNA mismatch repair. This chain is DNA mismatch repair protein MutH, found in Haemophilus ducreyi (strain 35000HP / ATCC 700724).